A 185-amino-acid polypeptide reads, in one-letter code: Ribosome-recycling factor (185 aa).

The protein belongs to the RRF family.

Its subcellular location is the cytoplasm. Responsible for the release of ribosomes from messenger RNA at the termination of protein biosynthesis. May increase the efficiency of translation by recycling ribosomes from one round of translation to another. This Pseudomonas fluorescens (strain Pf0-1) protein is Ribosome-recycling factor.